A 489-amino-acid polypeptide reads, in one-letter code: NADH-quinone oxidoreductase subunit N (489 aa).

14 helical membrane-spanning segments follow: residues Val-6–Leu-26, Val-37–Ser-57, Leu-66–Ala-86, Phe-105–Leu-125, Ala-127–Phe-147, Tyr-159–Ala-179, Ile-204–Leu-224, Pro-239–Leu-259, Phe-271–Ala-291, Arg-299–Cys-319, Val-329–Leu-349, Ser-377–Gly-397, Phe-408–Arg-430, and Ala-452–Ile-472.

The protein belongs to the complex I subunit 2 family. In terms of assembly, NDH-1 is composed of 14 different subunits. Subunits NuoA, H, J, K, L, M, N constitute the membrane sector of the complex.

The protein localises to the cell inner membrane. It carries out the reaction a quinone + NADH + 5 H(+)(in) = a quinol + NAD(+) + 4 H(+)(out). Functionally, NDH-1 shuttles electrons from NADH, via FMN and iron-sulfur (Fe-S) centers, to quinones in the respiratory chain. The immediate electron acceptor for the enzyme in this species is believed to be ubiquinone. Couples the redox reaction to proton translocation (for every two electrons transferred, four hydrogen ions are translocated across the cytoplasmic membrane), and thus conserves the redox energy in a proton gradient. The protein is NADH-quinone oxidoreductase subunit N of Tolumonas auensis (strain DSM 9187 / NBRC 110442 / TA 4).